A 133-amino-acid polypeptide reads, in one-letter code: Surface presentation of antigens protein SpaK (133 aa).

This sequence belongs to the SpaK family. Homodimer.

Required for surface presentation of invasion plasmid antigens. Chaperone specialized in the storage of effectors within the bacterial cytoplasm, maintaining them in a secretion-competent state, and allowing their immediate delivery to target cells upon contact of the bacterium with the host cells. Has been shown to chaperone IpaA, IpgB1, OspC3 and probably also OspB. In Shigella flexneri, this protein is Surface presentation of antigens protein SpaK (spaK).